A 208-amino-acid chain; its full sequence is ATP-dependent Clp protease proteolytic subunit (208 aa).

The active-site Nucleophile is the serine 111. Histidine 136 is a catalytic residue.

This sequence belongs to the peptidase S14 family. Fourteen ClpP subunits assemble into 2 heptameric rings which stack back to back to give a disk-like structure with a central cavity, resembling the structure of eukaryotic proteasomes.

The protein localises to the cytoplasm. The enzyme catalyses Hydrolysis of proteins to small peptides in the presence of ATP and magnesium. alpha-casein is the usual test substrate. In the absence of ATP, only oligopeptides shorter than five residues are hydrolyzed (such as succinyl-Leu-Tyr-|-NHMec, and Leu-Tyr-Leu-|-Tyr-Trp, in which cleavage of the -Tyr-|-Leu- and -Tyr-|-Trp bonds also occurs).. Cleaves peptides in various proteins in a process that requires ATP hydrolysis. Has a chymotrypsin-like activity. Plays a major role in the degradation of misfolded proteins. The protein is ATP-dependent Clp protease proteolytic subunit of Vibrio campbellii (strain ATCC BAA-1116).